Consider the following 103-residue polypeptide: Colicin-V (103 aa).

The propeptide occupies 1–15; that stretch reads MRTLTLNELDSVSGG. Residues cysteine 91 and cysteine 102 are joined by a disulfide bond.

The protein localises to the secreted. In terms of biological role, colicin V kills sensitive cells by disrupting the membrane potential. Colicins are polypeptide toxins produced by, and active against E.coli and closely related bacteria. The protein is Colicin-V (cvaC) of Escherichia coli.